The sequence spans 1538 residues: Myosin-9 (1538 aa).

One can recognise a Myosin N-terminal SH3-like domain in the interval 16-65; the sequence is SIGSHVWFEDPEVAWIDGEVEKINGQEVVIQATTGKKVTAKLSKIYPKDV. Positions 70–740 constitute a Myosin motor domain; it reads GGVDDMTKLS…QMAELDARRA (671 aa). ATP contacts are provided by residues 164-171 and 217-225; these read GESGAGKT and NNNSSRFGK. Actin-binding stretches follow at residues 503–537, 539–562, 597–621, and 621–643; these read LIEK…YQTF, THKR…AGEV, FPPL…KLQL, and LQQL…KPNN. 6 consecutive IQ domains span residues 743–772, 766–795, 791–820, 814–843, 839–868, and 862–891; these read LSSA…ATIS, LRKA…EAAA, REAA…ASLV, LHVA…TKAA, QTKA…GVVL, and LKNG…AARE. The stretch at 892 to 1064 forms a coiled coil; that stretch reads TGALKEAKDM…VLRQQAVSMA (173 aa). Residues 1017–1032 are compositionally biased toward basic and acidic residues; the sequence is SLEDKKKKLEETEKKG. Disordered stretches follow at residues 1017–1041 and 1098–1121; these read SLED…SLTR and SHSI…NEKQ. The 314-residue stretch at 1168-1481 folds into the Dilute domain; sequence DRIIQTIGHA…IANMRVLMTE (314 aa).

The protein belongs to the TRAFAC class myosin-kinesin ATPase superfamily. Myosin family. Plant myosin class XI subfamily. Homodimer.

In terms of biological role, myosin heavy chain that is required for the cell cycle-regulated transport of various organelles and proteins for their segregation. Functions by binding with its tail domain to receptor proteins on organelles and exerting force with its N-terminal motor domain against actin filaments, thereby transporting its cargo along polarized actin cables. Involved in trafficking of Golgi stacks and mitochondria. This chain is Myosin-9 (XI-C), found in Arabidopsis thaliana (Mouse-ear cress).